The following is a 297-amino-acid chain: Phosphoribosylaminoimidazole-succinocarboxamide synthase (297 aa).

The protein belongs to the SAICAR synthetase family.

The enzyme catalyses 5-amino-1-(5-phospho-D-ribosyl)imidazole-4-carboxylate + L-aspartate + ATP = (2S)-2-[5-amino-1-(5-phospho-beta-D-ribosyl)imidazole-4-carboxamido]succinate + ADP + phosphate + 2 H(+). Its pathway is purine metabolism; IMP biosynthesis via de novo pathway; 5-amino-1-(5-phospho-D-ribosyl)imidazole-4-carboxamide from 5-amino-1-(5-phospho-D-ribosyl)imidazole-4-carboxylate: step 1/2. The polypeptide is Phosphoribosylaminoimidazole-succinocarboxamide synthase (Corynebacterium glutamicum (strain ATCC 13032 / DSM 20300 / JCM 1318 / BCRC 11384 / CCUG 27702 / LMG 3730 / NBRC 12168 / NCIMB 10025 / NRRL B-2784 / 534)).